Reading from the N-terminus, the 107-residue chain is Small ribosomal subunit protein uS17 (107 aa).

Belongs to the universal ribosomal protein uS17 family. As to quaternary structure, part of the 30S ribosomal subunit.

In terms of biological role, one of the primary rRNA binding proteins, it binds specifically to the 5'-end of 16S ribosomal RNA. In Nitrosopumilus maritimus (strain SCM1), this protein is Small ribosomal subunit protein uS17.